Here is a 167-residue protein sequence, read N- to C-terminus: Small ribosomal subunit protein uS5 (167 aa).

In terms of domain architecture, S5 DRBM spans 12–75; sequence LNEKLIAVNR…EKARRNIRDV (64 aa).

Belongs to the universal ribosomal protein uS5 family. As to quaternary structure, part of the 30S ribosomal subunit. Contacts proteins S4 and S8.

Its function is as follows. With S4 and S12 plays an important role in translational accuracy. Located at the back of the 30S subunit body where it stabilizes the conformation of the head with respect to the body. In Psychromonas ingrahamii (strain DSM 17664 / CCUG 51855 / 37), this protein is Small ribosomal subunit protein uS5.